The sequence spans 285 residues: Pseudouridine-5'-phosphate glycosidase (285 aa).

The active-site Proton donor is the glutamate 17. Substrate is bound by residues lysine 77 and valine 97. Aspartate 126 is a binding site for Mn(2+). 128–130 (SQD) contributes to the substrate binding site. Lysine 147 acts as the Nucleophile in catalysis.

It belongs to the pseudouridine-5'-phosphate glycosidase family. In terms of assembly, homotrimer. Requires Mn(2+) as cofactor.

The enzyme catalyses D-ribose 5-phosphate + uracil = psi-UMP + H2O. Catalyzes the reversible cleavage of pseudouridine 5'-phosphate (PsiMP) to ribose 5-phosphate and uracil. Functions biologically in the cleavage direction, as part of a pseudouridine degradation pathway. In Thermotoga maritima (strain ATCC 43589 / DSM 3109 / JCM 10099 / NBRC 100826 / MSB8), this protein is Pseudouridine-5'-phosphate glycosidase.